A 429-amino-acid polypeptide reads, in one-letter code: Metacaspase-1A (429 aa).

Residues 1–68 (MQHHHQGSYG…PQHNGGQMYG (68 aa)) form a disordered region. The segment covering 8 to 19 (SYGGGGGGGGYP) has biased composition (gly residues). Low complexity predominate over residues 20–45 (GQAYREQNPYGYGQQSPQQGYGAPQQ). Residues 46 to 62 (HNGYNQPPSGYGQPQHN) show a composition bias toward polar residues. Active-site residues include histidine 220 and cysteine 276.

Belongs to the peptidase C14B family.

Functionally, involved in cell death (apoptosis). In Aspergillus clavatus (strain ATCC 1007 / CBS 513.65 / DSM 816 / NCTC 3887 / NRRL 1 / QM 1276 / 107), this protein is Metacaspase-1A (casA).